Reading from the N-terminus, the 64-residue chain is Large ribosomal subunit protein bL28 (64 aa).

Residues 1 to 26 (MARRDQLTGKGPLSGNTRSHAMNHSK) are disordered.

Belongs to the bacterial ribosomal protein bL28 family.

In Ureaplasma urealyticum serovar 10 (strain ATCC 33699 / Western), this protein is Large ribosomal subunit protein bL28.